The following is a 251-amino-acid chain: NADPH-dependent oxidoreductase (251 aa).

It belongs to the flavin oxidoreductase frp family. FMN is required as a cofactor.

Its function is as follows. Reduces FMN, organic nitro compounds and disulfide DTNB. Involved in maintenance of the cellular redox state and the disulfide stress response. The protein is NADPH-dependent oxidoreductase (nfrA) of Staphylococcus haemolyticus (strain JCSC1435).